The sequence spans 251 residues: 1-(5-phosphoribosyl)-5-[(5-phosphoribosylamino)methylideneamino] imidazole-4-carboxamide isomerase (251 aa).

The active-site Proton acceptor is the aspartate 8. Aspartate 131 functions as the Proton donor in the catalytic mechanism.

It belongs to the HisA/HisF family.

Its subcellular location is the cytoplasm. The catalysed reaction is 1-(5-phospho-beta-D-ribosyl)-5-[(5-phospho-beta-D-ribosylamino)methylideneamino]imidazole-4-carboxamide = 5-[(5-phospho-1-deoxy-D-ribulos-1-ylimino)methylamino]-1-(5-phospho-beta-D-ribosyl)imidazole-4-carboxamide. It functions in the pathway amino-acid biosynthesis; L-histidine biosynthesis; L-histidine from 5-phospho-alpha-D-ribose 1-diphosphate: step 4/9. The sequence is that of 1-(5-phosphoribosyl)-5-[(5-phosphoribosylamino)methylideneamino] imidazole-4-carboxamide isomerase from Burkholderia cenocepacia (strain HI2424).